Consider the following 214-residue polypeptide: Probable nicotinate-nucleotide adenylyltransferase (214 aa).

This sequence belongs to the NadD family.

It carries out the reaction nicotinate beta-D-ribonucleotide + ATP + H(+) = deamido-NAD(+) + diphosphate. It participates in cofactor biosynthesis; NAD(+) biosynthesis; deamido-NAD(+) from nicotinate D-ribonucleotide: step 1/1. Functionally, catalyzes the reversible adenylation of nicotinate mononucleotide (NaMN) to nicotinic acid adenine dinucleotide (NaAD). This is Probable nicotinate-nucleotide adenylyltransferase from Aeromonas salmonicida (strain A449).